Reading from the N-terminus, the 1384-residue chain is ABC transporter C family member 2 (1384 aa).

The ABC transmembrane type-1 1 domain occupies 104–388; it reads NKISVATKIF…LPEAIHRALS (285 aa). 5 consecutive transmembrane segments (helical) span residues 112–132, 140–160, 226–246, 247–267, and 333–353; these read IFVA…IYYI, TFKF…SLTL, IFVF…IVGL, SGLV…FLST, and MITQ…YALT. Residues 505-724 form the ABC transporter 1 domain; the sequence is IEYDGAVQPS…GIDFESIMKT (220 aa). 537–544 serves as a coordination point for ATP; sequence GIVGSGKT. The tract at residues 729–756 is disordered; it reads IDENDQSSTSTTDKKSSTSSSSSELKKS. Positions 735 to 756 are enriched in low complexity; it reads SSTSTTDKKSSTSSSSSELKKS. Helical transmembrane passes span 813-833, 852-872, 941-961, 1036-1056, and 1061-1081; these read LFFL…LSDF, ILYY…RYFM, LFMM…LVVV, GIRL…SSLF, and GFSV…NWTI. In terms of domain architecture, ABC transmembrane type-1 2 spans 814-1093; sequence FFLTCALYFI…MTELEVKMNS (280 aa). In terms of domain architecture, ABC transporter 2 spans 1137 to 1371; that stretch reads VEFKNVEIKY…EGSRFKKLVK (235 aa). Residue 1171-1178 participates in ATP binding; it reads GRTGAGKS.

Belongs to the ABC transporter superfamily. ABCC family. Conjugate transporter (TC 3.A.1.208) subfamily.

Its subcellular location is the membrane. The sequence is that of ABC transporter C family member 2 (abcC2) from Dictyostelium discoideum (Social amoeba).